Here is a 419-residue protein sequence, read N- to C-terminus: NF-kappa-B essential modulator (419 aa).

The segment at 1–46 (MSRTPWKSQPCEMVQPSGGPAGDQDVLGEESSLGKPTMLHLPSEQG) is disordered. Positions 1 to 197 (MSRTPWKSQP…REALQQQHSV (197 aa)) are required for interaction with and ubiquitination by MARCHF2. 4 positions are modified to phosphoserine: serine 31, serine 43, serine 68, and serine 85. The interaction with CHUK/IKBKB stretch occupies residues 44-111 (EQGAPETFQR…RLVERLSLEK (68 aa)). A coiled-coil region spans residues 100-353 (ARRLVERLSL…KTSCQESARI (254 aa)). Residues lysine 111, lysine 139, lysine 143, lysine 226, lysine 246, and lysine 264 each participate in a glycyl lysine isopeptide (Lys-Gly) (interchain with G-Cter in ubiquitin) cross-link. The segment at 150–257 (LGELQESQSR…SVVSSERNRG (108 aa)) is interaction with TANK. Positions 242–350 (DNHIKSSVVS…SRLKTSCQES (109 aa)) are ubiquitin-binding (UBAN). The tract at residues 246 to 365 (KSSVVSSERN…MRKRHVEVSQ (120 aa)) is self-association. Residues 251–419 (SSERNRGLQL…LQIHVMECIE (169 aa)) are required for interaction with TNFAIP3. Lysine 277 is covalently cross-linked (Glycyl lysine isopeptide (Lys-Gly) (interchain with G-Cter in SUMO); alternate). A Glycyl lysine isopeptide (Lys-Gly) (interchain with G-Cter in ubiquitin); alternate cross-link involves residue lysine 277. Glycyl lysine isopeptide (Lys-Gly) (interchain with G-Cter in ubiquitin) cross-links involve residues lysine 283, lysine 285, lysine 292, and lysine 302. Residue lysine 309 forms a Glycyl lysine isopeptide (Lys-Gly) (interchain with G-Cter in SUMO); alternate linkage. Residue lysine 309 forms a Glycyl lysine isopeptide (Lys-Gly) (interchain with G-Cter in ubiquitin); alternate linkage. Residues 322-343 (LAERKELLQEQLEQLQREYSRL) are leucine-zipper. Lysine 326 is covalently cross-linked (Glycyl lysine isopeptide (Lys-Gly) (interchain with G-Cter in ubiquitin)). Residues 363–394 (VSQPTLPPAPAHHSFHPALPSQRRSPPEEPPN) form a disordered region. A phosphoserine mark is found at serine 376 and serine 387. An interaction with CYLD region spans residues 382–419 (PSQRRSPPEEPPNFCCPKCQYQAPDMDTLQIHVMECIE). Residues 389–419 (PEEPPNFCCPKCQYQAPDMDTLQIHVMECIE) form a CCHC NOA-type zinc finger. Cysteine 397 is a binding site for Zn(2+). Lysine 399 participates in a covalent cross-link: Glycyl lysine isopeptide (Lys-Gly) (interchain with G-Cter in ubiquitin). Zn(2+) is bound by residues cysteine 400, histidine 413, and cysteine 417.

As to quaternary structure, homodimer; disulfide-linked. Component of the I-kappa-B-kinase (IKK) core complex consisting of CHUK, IKBKB and IKBKG; probably four alpha/CHUK-beta/IKBKB dimers are associated with four gamma/IKBKG subunits. The IKK core complex seems to associate with regulatory or adapter proteins to form a IKK-signalosome holo-complex. The IKK complex associates with TERF2IP/RAP1, leading to promote IKK-mediated phosphorylation of RELA/p65. Part of a complex composed of NCOA2, NCOA3, CHUK/IKKA, IKBKB, IKBKG and CREBBP. Interacts with COPS3, CYLD, NALP2, TRPC4AP and PIDD1. Interacts with ATM; the complex is exported from the nucleus. Interacts with TRAF6. Interacts with IKBKE. Interacts with TANK; the interaction is enhanced by IKBKE and TBK1. Part of a ternary complex consisting of TANK, IKBKB and IKBKG. Interacts with ZFAND5. Interacts with RIPK2. Interacts with TNIP1 and TNFAIP3; TNIP1 facilitates the TNFAIP3-mediated de-ubiquitination of IKBKG. Interacts with TNFAIP3; the interaction is induced by TNF stimulation and by polyubiquitin. Binds (via UBAN region) polyubiquitin; binds both 'Lys-63'-linked and linear polyubiquitin, with higher affinity for linear ubiquitin. Interacts with NLRP10. Interacts with TANK; this interaction increases in response to DNA damage. Interacts with USP10; this interaction increases in response to DNA damage. Interacts with ZC3H12A; this interaction increases in response to DNA damage. Interacts with IFIT5; the interaction synergizes the recruitment of IKK to MAP3K7 and enhances IKK phosphorylation. Interacts with TRIM29; this interaction induces IKBKG/NEMO ubiquitination and proteolytic degradation. Interacts with TRIM13; this interaction leads to IKBKG/NEMO ubiquitination. Interacts with ARFIP2. Interacts with RIPK1. Interacts with (ubiquitinated) BCL10; interaction with polyubiquitinated BCL10 via both 'Lys-63'-linked and linear ubiquitin is required for TCR-induced NF-kappa-B activation. Interacts with MARCHF2; during the late stages of macrophage viral and bacterial infection; the interaction leads to ubiquitination and degradation of IKBKG/NEMO. In terms of processing, phosphorylation at Ser-68 attenuates aminoterminal homodimerization. Polyubiquitinated on Lys-285 via 'Lys-63'-linked ubiquitin; the ubiquitination is mediated downstream of NOD2 and RIPK2 and probably plays a role in signaling by facilitating interactions with ubiquitin domain-containing proteins and activates the NF-kappa-B pathway. Polyubiquitinated on Lys-285 and Lys-399 through 'Lys-63'-linked ubiquitin; the ubiquitination is mediated by BCL10, MALT1 and TRAF6 and probably plays a role in signaling by facilitating interactions with ubiquitin domain-containing proteins and activates the NF-kappa-B pathway. Monoubiquitinated on Lys-277 and Lys-309; promotes nuclear export. Polyubiquitinated through 'Lys-27' by TRIM23; involved in antiviral innate and inflammatory responses. Linear polyubiquitinated on Lys-111, Lys-143, Lys-226, Lys-246, Lys-264, Lys-277, Lys-285, Lys-292, Lys-302, Lys-309 and Lys-326; the head-to-tail polyubiquitination is mediated by the LUBAC complex and plays a key role in NF-kappa-B activation. Deubiquitinated by USP10 in a TANK-dependent and -independent manner, leading to the negative regulation of NF-kappa-B signaling upon DNA damage. Ubiquitinated at Lys-326 by MARCHF2 following bacterial and viral infection which leads to its degradation. Post-translationally, sumoylated on Lys-277 and Lys-309 with SUMO1; the modification results in phosphorylation of Ser-85 by ATM leading to a replacement of the sumoylation by mono-ubiquitination on these residues. In terms of processing, neddylated by TRIM40, resulting in stabilization of NFKBIA and down-regulation of NF-kappa-B activity. (Microbial infection) Cleaved by porcine reproductive and respiratory syndrome virus serine protease nsp4 after Glu-349. The cleavage inhibits NEMO proper function.

Its subcellular location is the cytoplasm. It localises to the nucleus. Regulatory subunit of the IKK core complex which phosphorylates inhibitors of NF-kappa-B thus leading to the dissociation of the inhibitor/NF-kappa-B complex and ultimately the degradation of the inhibitor. Its binding to scaffolding polyubiquitin plays a key role in IKK activation by multiple signaling receptor pathways. Can recognize and bind both 'Lys-63'-linked and linear polyubiquitin upon cell stimulation, with a much highr affinity for linear polyubiquitin. Could be implicated in NF-kappa-B-mediated protection from cytokine toxicity. Essential for viral activation of IRF3. Involved in TLR3- and IFIH1-mediated antiviral innate response; this function requires 'Lys-27'-linked polyubiquitination. The polypeptide is NF-kappa-B essential modulator (IKBKG) (Sus scrofa (Pig)).